The primary structure comprises 194 residues: MDYDKLKGVIEGLLFISGDEGIDAKEISEITEVTEEEVIDLIEDMKADFRRAGRGIQIVEVAKAYQLTTLPEHVPYFERLATSPGQSTLSQAALETLAIVAYKQPLTRSEIEEIRGVKCEKALNTLLSKQLIREAGRAEGIGRPILYATTKEFLEHFGLRELGDLPEPPVNLDIEEARLEASALFGKAEEATND.

The protein belongs to the ScpB family. Homodimer. Homodimerization may be required to stabilize the binding of ScpA to the Smc head domains. Component of a cohesin-like complex composed of ScpA, ScpB and the Smc homodimer, in which ScpA and ScpB bind to the head domain of Smc. The presence of the three proteins is required for the association of the complex with DNA.

It is found in the cytoplasm. In terms of biological role, participates in chromosomal partition during cell division. May act via the formation of a condensin-like complex containing Smc and ScpA that pull DNA away from mid-cell into both cell halves. This chain is Segregation and condensation protein B, found in Brevibacillus brevis (strain 47 / JCM 6285 / NBRC 100599).